We begin with the raw amino-acid sequence, 296 residues long: Nitrogenase iron protein (296 aa).

12 to 19 is a binding site for ATP; sequence GKGGIGKS. A [4Fe-4S] cluster-binding site is contributed by Cys100. At Arg103 the chain carries ADP-ribosylarginine; by dinitrogenase reductase ADP-ribosyltransferase. A [4Fe-4S] cluster-binding site is contributed by Cys134.

It belongs to the NifH/BchL/ChlL family. Homodimer. [4Fe-4S] cluster serves as cofactor. Post-translationally, the reversible ADP-ribosylation of Arg-103 inactivates the nitrogenase reductase and regulates nitrogenase activity.

The enzyme catalyses N2 + 8 reduced [2Fe-2S]-[ferredoxin] + 16 ATP + 16 H2O = H2 + 8 oxidized [2Fe-2S]-[ferredoxin] + 2 NH4(+) + 16 ADP + 16 phosphate + 6 H(+). Its function is as follows. The key enzymatic reactions in nitrogen fixation are catalyzed by the nitrogenase complex, which has 2 components: the iron protein and the molybdenum-iron protein. This Acidithiobacillus ferrooxidans (strain ATCC 23270 / DSM 14882 / CIP 104768 / NCIMB 8455) (Ferrobacillus ferrooxidans (strain ATCC 23270)) protein is Nitrogenase iron protein.